Consider the following 99-residue polypeptide: Apolipoprotein C-III (99 aa).

Positions 1–20 (MQPRTLLTVALLALLASARA) are cleaved as a signal peptide. Methionine 63 bears the Methionine sulfoxide mark. The segment at 68–99 (RFLKGYWSKFTDKFTGFWDSNPEDQPTPAIES) is lipid-binding. O-linked (GalNAc...) threonine glycosylation is present at threonine 94.

Belongs to the apolipoprotein C3 family. The most abundant glycoforms are characterized by an O-linked disaccharide galactose linked to N-acetylgalactosamine (Gal-GalNAc), further modified with up to 3 sialic acid residues. Less abundant glycoforms are characterized by more complex and fucosylated glycan moieties. O-glycosylated on Thr-94 with a core 1 or possibly core 8 glycan.

It is found in the secreted. In terms of biological role, component of triglyceride-rich very low density lipoproteins (VLDL) and high density lipoproteins (HDL) in plasma. Plays a multifaceted role in triglyceride homeostasis. Intracellularly, promotes hepatic very low density lipoprotein 1 (VLDL1) assembly and secretion; extracellularly, attenuates hydrolysis and clearance of triglyceride-rich lipoproteins (TRLs). Impairs the lipolysis of TRLs by inhibiting lipoprotein lipase and the hepatic uptake of TRLs by remnant receptors. Formed of several curved helices connected via semiflexible hinges, so that it can wrap tightly around the curved micelle surface and easily adapt to the different diameters of its natural binding partners. The protein is Apolipoprotein C-III (Apoc3) of Mus musculus (Mouse).